The primary structure comprises 509 residues: T-complex protein 11-like protein 1 (509 aa).

Over residues 1-12 (MSENLDKSHVDE) the composition is skewed to basic and acidic residues. A disordered region spans residues 1–57 (MSENLDKSHVDEAGEAEAAASEQGLEGALECSDETLQKKVKSDSPSSQRVGRPHSSP). A compositionally biased stretch (low complexity) spans 16 to 30 (AEAAASEQGLEGALE). Residue Ser56 is modified to Phosphoserine.

It belongs to the TCP11 family.

This Mus musculus (Mouse) protein is T-complex protein 11-like protein 1 (Tcp11l1).